We begin with the raw amino-acid sequence, 150 residues long: UPF0756 membrane protein PMI1560 (150 aa).

4 helical membrane-spanning segments follow: residues 16 to 36 (GLGIISHNMTVTLAMIFLLVI), 51 to 71 (YGMTIGILILTIGVMTPIATG), 82 to 102 (FLNWKSLLAIAIGIIVSWLGA), and 123 to 143 (VIGVALFRGVPVGPLIAAGIL).

This sequence belongs to the UPF0756 family.

It localises to the cell membrane. The sequence is that of UPF0756 membrane protein PMI1560 from Proteus mirabilis (strain HI4320).